The chain runs to 347 residues: Phenylalanine--tRNA ligase alpha subunit (347 aa).

Position 261 (Glu261) interacts with Mg(2+).

The protein belongs to the class-II aminoacyl-tRNA synthetase family. Phe-tRNA synthetase alpha subunit type 1 subfamily. In terms of assembly, tetramer of two alpha and two beta subunits. Mg(2+) serves as cofactor.

The protein localises to the cytoplasm. The catalysed reaction is tRNA(Phe) + L-phenylalanine + ATP = L-phenylalanyl-tRNA(Phe) + AMP + diphosphate + H(+). The polypeptide is Phenylalanine--tRNA ligase alpha subunit (Streptococcus thermophilus (strain ATCC BAA-491 / LMD-9)).